The following is a 61-amino-acid chain: LKCHNKLVPFLSKTCPDGKNLCYKMSMEVTPMIPIKRGCTDTCPKSSLLVKVVCCKTDKCN.

Intrachain disulfides connect Cys3–Cys22, Cys15–Cys39, Cys43–Cys54, and Cys55–Cys60.

The protein belongs to the three-finger toxin family. Short-chain subfamily. Type IB cytotoxin sub-subfamily. As to expression, expressed by the venom gland.

Its subcellular location is the secreted. Functionally, this protein lyses red blood cells and has cardiotoxic and hypotensive activities. This chain is Cytotoxin 3, found in Hemachatus haemachatus (Rinkhals).